The sequence spans 67 residues: Small ribosomal subunit protein eS31 (67 aa).

Zn(2+)-binding residues include Cys31, Cys34, Cys49, and Cys52. Residues 31–52 (CPKCGAGVFMAEHLNRFACGKC) form a C4-type zinc finger.

It belongs to the eukaryotic ribosomal protein eS31 family. As to quaternary structure, part of the 30S ribosomal subunit. Zn(2+) serves as cofactor.

The chain is Small ribosomal subunit protein eS31 from Methanococcus maripaludis (strain DSM 14266 / JCM 13030 / NBRC 101832 / S2 / LL).